We begin with the raw amino-acid sequence, 209 residues long: Thiamine-phosphate synthase 1 (209 aa).

4-amino-2-methyl-5-(diphosphooxymethyl)pyrimidine contacts are provided by residues 39 to 43 (QFREK) and Asn74. Residues Asp75 and Asp94 each coordinate Mg(2+). Ser112 provides a ligand contact to 4-amino-2-methyl-5-(diphosphooxymethyl)pyrimidine. Residue 138-140 (TQS) participates in 2-[(2R,5Z)-2-carboxy-4-methylthiazol-5(2H)-ylidene]ethyl phosphate binding. Lys141 is a 4-amino-2-methyl-5-(diphosphooxymethyl)pyrimidine binding site. 2-[(2R,5Z)-2-carboxy-4-methylthiazol-5(2H)-ylidene]ethyl phosphate-binding positions include Gly170 and 190 to 191 (IS).

The protein belongs to the thiamine-phosphate synthase family. It depends on Mg(2+) as a cofactor.

The enzyme catalyses 2-[(2R,5Z)-2-carboxy-4-methylthiazol-5(2H)-ylidene]ethyl phosphate + 4-amino-2-methyl-5-(diphosphooxymethyl)pyrimidine + 2 H(+) = thiamine phosphate + CO2 + diphosphate. The catalysed reaction is 2-(2-carboxy-4-methylthiazol-5-yl)ethyl phosphate + 4-amino-2-methyl-5-(diphosphooxymethyl)pyrimidine + 2 H(+) = thiamine phosphate + CO2 + diphosphate. It carries out the reaction 4-methyl-5-(2-phosphooxyethyl)-thiazole + 4-amino-2-methyl-5-(diphosphooxymethyl)pyrimidine + H(+) = thiamine phosphate + diphosphate. It participates in cofactor biosynthesis; thiamine diphosphate biosynthesis; thiamine phosphate from 4-amino-2-methyl-5-diphosphomethylpyrimidine and 4-methyl-5-(2-phosphoethyl)-thiazole: step 1/1. Condenses 4-methyl-5-(beta-hydroxyethyl)thiazole monophosphate (THZ-P) and 2-methyl-4-amino-5-hydroxymethyl pyrimidine pyrophosphate (HMP-PP) to form thiamine monophosphate (TMP). The polypeptide is Thiamine-phosphate synthase 1 (Streptococcus pneumoniae serotype 4 (strain ATCC BAA-334 / TIGR4)).